The chain runs to 510 residues: UDP-N-acetylmuramoyl-tripeptide--D-alanyl-D-alanine ligase (510 aa).

ATP is bound at residue 136–142 (GSSGKTS).

Belongs to the MurCDEF family. MurF subfamily.

It is found in the cytoplasm. The catalysed reaction is D-alanyl-D-alanine + UDP-N-acetyl-alpha-D-muramoyl-L-alanyl-gamma-D-glutamyl-meso-2,6-diaminopimelate + ATP = UDP-N-acetyl-alpha-D-muramoyl-L-alanyl-gamma-D-glutamyl-meso-2,6-diaminopimeloyl-D-alanyl-D-alanine + ADP + phosphate + H(+). The protein operates within cell wall biogenesis; peptidoglycan biosynthesis. In terms of biological role, involved in cell wall formation. Catalyzes the final step in the synthesis of UDP-N-acetylmuramoyl-pentapeptide, the precursor of murein. This is UDP-N-acetylmuramoyl-tripeptide--D-alanyl-D-alanine ligase from Mycobacterium tuberculosis (strain CDC 1551 / Oshkosh).